The sequence spans 67 residues: Large ribosomal subunit protein bL35 (67 aa).

Positions 1 to 41 (MPKMKTHRGAAKRFKKTGTGKLKRSHAYTSHMFRHKSQKQK) are disordered.

It belongs to the bacterial ribosomal protein bL35 family.

In Shouchella clausii (strain KSM-K16) (Alkalihalobacillus clausii), this protein is Large ribosomal subunit protein bL35.